The chain runs to 120 residues: Protein GP96 (120 aa).

Belongs to the herpesviridae UL96 family.

In Cavia porcellus (Guinea pig), this protein is Protein GP96.